Here is a 462-residue protein sequence, read N- to C-terminus: Adenosylhomocysteinase (462 aa).

3 residues coordinate substrate: T55, D128, and E188. 189-191 serves as a coordination point for NAD(+); it reads TTT. Substrate is bound by residues K218 and D222. Residues N223, 252 to 257, E275, N310, 331 to 333, and N376 contribute to the NAD(+) site; these read GYGDVG and IGH.

It belongs to the adenosylhomocysteinase family. Requires NAD(+) as cofactor.

Its subcellular location is the cytoplasm. It carries out the reaction S-adenosyl-L-homocysteine + H2O = L-homocysteine + adenosine. It participates in amino-acid biosynthesis; L-homocysteine biosynthesis; L-homocysteine from S-adenosyl-L-homocysteine: step 1/1. Functionally, may play a key role in the regulation of the intracellular concentration of adenosylhomocysteine. This is Adenosylhomocysteinase from Roseobacter denitrificans (strain ATCC 33942 / OCh 114) (Erythrobacter sp. (strain OCh 114)).